The sequence spans 726 residues: Probable cyclic nucleotide-gated ion channel 14 (726 aa).

Over 1-86 (MEFKRDNTVR…GDAVLQWNRV (86 aa)) the chain is Cytoplasmic. The helical transmembrane segment at 87–107 (FLFWCLVALYVDPLFFFLSSV) threads the bilayer. Residues 108 to 122 (KRIGRSSCMTTDLKL) lie on the Extracellular side of the membrane. Residues 123–143 (GIVITFFRTLADLFYVLHIVI) traverse the membrane as a helical segment. The Cytoplasmic segment spans residues 144–177 (KFRTAYVSRTSRVFGRGELVKDPKLIARRYLRSD). The helical transmembrane segment at 178–198 (FIVDLIACLPLPQIVSWFILP) threads the bilayer. Residues 199-211 (SIRSSHSDHTTNA) lie on the Extracellular side of the membrane. A helical membrane pass occupies residues 212–232 (LVLIVLVQYIPRLYLIFPLSA). Residues 233 to 252 (EIIKATGVVTTTAWAGAAYN) are Cytoplasmic-facing. A helical transmembrane segment spans residues 253–273 (LLQYMLASHILGSAWYLLSIE). Topologically, residues 274 to 377 (RQATCWKAEC…LSTSTSVLET (104 aa)) are extracellular. Residues 378-398 (MFAILVAIFGLVLFALLIGNM) traverse the membrane as a helical segment. Residues 399-726 (QTYLQSITVR…PDEPDFSVDD (328 aa)) are Cytoplasmic-facing. Residues 481 to 605 (LFAQ…SKKL) and E552 contribute to the a nucleoside 3',5'-cyclic phosphate site. The calmodulin-binding stretch occupies residues 597–612 (FRRLHSKKLQHTFRYY). An IQ domain is found at 617–646 (RTWAACFVQVAWRRYKRKKLAKSLSLAESF). The tract at residues 707-726 (KDVEIPMLPKPDEPDFSVDD) is disordered.

Belongs to the cyclic nucleotide-gated cation channel (TC 1.A.1.5) family. In terms of assembly, homotetramer or heterotetramer.

The protein resides in the cell membrane. Probable cyclic nucleotide-gated ion channel. In Arabidopsis thaliana (Mouse-ear cress), this protein is Probable cyclic nucleotide-gated ion channel 14 (CNGC14).